The chain runs to 441 residues: MASVSFQDRGRKRVPLSLYAPLRVTNDKPLSKVLANNAVPTNKGNKDQQIGYWNEQIRWRMRRGERIEQPSNWHFYYLGTGPHGDLRYRTRTEGVFWVAKEGAKTEPTNLGVRKASEKPIIPKFSQQLPSVVEIVEPNTPPASRANSRSRSRGNGNNRSRSPSNNRGNNQSRGNSQNRGNNQGRGASQNRGGNNNNNNKSRNQSNNRNQSNDRGGVTSRDDLVAAVKDALKSLGIGENPDRHKQQQKPKQEKSDNSGKNTPKKNKSRATSKERDLKDIPEWRRIPKGENSVAACFGPRGGFKNFGDAEFVEKGVDASGYAQIASLAPNVAALLFGGNVAVRELADSYEITYNYKMTVPKSDPNVELLVSQVDAFKTGNAKLQRKKEKKNKRETTLQQHEEAIYDDVGAPSDVTHANLEWDTAVDGGDTAVEIINEIFDTGN.

The residue at position 5 (Ser5) is a Phosphoserine; by host. Residues 14 to 136 form the CoV N NTD domain; it reads VPLSLYAPLR…QLPSVVEIVE (123 aa). The tract at residues 16–146 is RNA-binding; it reads LSLYAPLRVT…PNTPPASRAN (131 aa). Disordered regions lie at residues 131-219 and 231-278; these read VVEI…VTSR and KSLG…LKDI. Ser143 is subject to Phosphoserine; by host. Over residues 143–215 the composition is skewed to low complexity; that stretch reads SRANSRSRSR…NRNQSNDRGG (73 aa). 2 stretches are compositionally biased toward basic and acidic residues: residues 238–255 and 269–278; these read NPDR…KSDN and TSKERDLKDI. The CoV N CTD domain occupies 266 to 382; sequence SRATSKERDL…AFKTGNAKLQ (117 aa). Residues 277–379 are dimerization; it reads DIPEWRRIPK…QVDAFKTGNA (103 aa).

It belongs to the alphacoronavirus nucleocapsid protein family. As to quaternary structure, homooligomer. Both monomeric and oligomeric forms interact with RNA. Interacts with protein M. Interacts with NSP3; this interaction serves to tether the genome to the newly translated replicase-transcriptase complex at a very early stage of infection. Interacts with host RSAD2; this interaction inhibits viral replication. ADP-ribosylated. The ADP-ribosylation is retained in the virion during infection. In terms of processing, phosphorylated on serine and threonine residues.

The protein localises to the virion. Its subcellular location is the host endoplasmic reticulum-Golgi intermediate compartment. It localises to the host Golgi apparatus. Packages the positive strand viral genome RNA into a helical ribonucleocapsid (RNP) and plays a fundamental role during virion assembly through its interactions with the viral genome and membrane protein M. Plays an important role in enhancing the efficiency of subgenomic viral RNA transcription as well as viral replication. The polypeptide is Nucleoprotein (Porcine epidemic diarrhea virus (strain CV777) (PEDV)).